The following is a 312-amino-acid chain: Porphobilinogen deaminase (312 aa).

Cys241 bears the S-(dipyrrolylmethanemethyl)cysteine mark.

Belongs to the HMBS family. Monomer. Dipyrromethane is required as a cofactor.

It catalyses the reaction 4 porphobilinogen + H2O = hydroxymethylbilane + 4 NH4(+). Its pathway is porphyrin-containing compound metabolism; protoporphyrin-IX biosynthesis; coproporphyrinogen-III from 5-aminolevulinate: step 2/4. It functions in the pathway porphyrin-containing compound metabolism; chlorophyll biosynthesis. Functionally, tetrapolymerization of the monopyrrole PBG into the hydroxymethylbilane pre-uroporphyrinogen in several discrete steps. This chain is Porphobilinogen deaminase, found in Chlorobaculum tepidum (strain ATCC 49652 / DSM 12025 / NBRC 103806 / TLS) (Chlorobium tepidum).